Here is a 168-residue protein sequence, read N- to C-terminus: uncharacterized protein (168 aa).

The N-acetyltransferase domain occupies 14-168 (IDIPLLDAAS…EYKHWIYVTK (155 aa)).

The protein belongs to the acetyltransferase family.

This is an uncharacterized protein from Bacillus subtilis (strain 168).